The primary structure comprises 148 residues: FAD synthase (148 aa).

ATP contacts are provided by residues 14–15 (VF), 19–22 (HVGH), and Asp100.

Belongs to the archaeal FAD synthase family. As to quaternary structure, homodimer. The cofactor is a divalent metal cation.

It carries out the reaction FMN + ATP + H(+) = FAD + diphosphate. Its pathway is cofactor biosynthesis; FAD biosynthesis; FAD from FMN: step 1/1. In terms of biological role, catalyzes the transfer of the AMP portion of ATP to flavin mononucleotide (FMN) to produce flavin adenine dinucleotide (FAD) coenzyme. The polypeptide is FAD synthase (Pyrococcus abyssi (strain GE5 / Orsay)).